Reading from the N-terminus, the 90-residue chain is Small ribosomal subunit protein bS20 (90 aa).

The protein belongs to the bacterial ribosomal protein bS20 family.

Its function is as follows. Binds directly to 16S ribosomal RNA. The polypeptide is Small ribosomal subunit protein bS20 (Mesomycoplasma hyopneumoniae (strain J / ATCC 25934 / NCTC 10110) (Mycoplasma hyopneumoniae)).